A 237-amino-acid polypeptide reads, in one-letter code: NAD-dependent protein deacetylase (237 aa).

One can recognise a Deacetylase sirtuin-type domain in the interval 1–237; that stretch reads MLTTWLTEAK…LEETNRALQA (237 aa). Residues alanine 18, threonine 22, phenylalanine 29, arginine 30, glutamine 95, aspartate 98, and histidine 113 each contribute to the NAD(+) site. Phenylalanine 29 provides a ligand contact to nicotinamide. Aspartate 98 contributes to the nicotinamide binding site. Histidine 113 acts as the Proton acceptor in catalysis. Positions 121, 124, 140, and 142 each coordinate Zn(2+). 4 residues coordinate NAD(+): serine 180, serine 181, asparagine 205, and isoleucine 224.

The protein belongs to the sirtuin family. Class U subfamily. The cofactor is Zn(2+).

Its subcellular location is the cytoplasm. It carries out the reaction N(6)-acetyl-L-lysyl-[protein] + NAD(+) + H2O = 2''-O-acetyl-ADP-D-ribose + nicotinamide + L-lysyl-[protein]. Its function is as follows. NAD-dependent protein deacetylase which modulates the activities of several enzymes which are inactive in their acetylated form. The chain is NAD-dependent protein deacetylase from Halalkalibacterium halodurans (strain ATCC BAA-125 / DSM 18197 / FERM 7344 / JCM 9153 / C-125) (Bacillus halodurans).